Reading from the N-terminus, the 141-residue chain is Hemoglobin subunit alpha-1 (141 aa).

The region spanning 1-141 (VLSGSDKNNV…VGNVLTAKYR (141 aa)) is the Globin domain. Residue His-58 participates in O2 binding. Residue His-87 participates in heme b binding.

The protein belongs to the globin family. Heterotetramer of two alpha chains and two beta chains. As to expression, red blood cells.

In terms of biological role, involved in oxygen transport from the lung to the various peripheral tissues. The sequence is that of Hemoglobin subunit alpha-1 from Stercorarius maccormicki (South polar skua).